The primary structure comprises 115 residues: Probable malate:quinone oxidoreductase (115 aa).

The segment at 88-115 (QMPAAAPTATAKPAETPREASPQHDMAL) is disordered. The span at 90 to 101 (PAAAPTATAKPA) shows a compositional bias: low complexity. Basic and acidic residues predominate over residues 102 to 115 (ETPREASPQHDMAL).

Belongs to the MQO family. The cofactor is FAD.

It catalyses the reaction (S)-malate + a quinone = a quinol + oxaloacetate. Its pathway is carbohydrate metabolism; tricarboxylic acid cycle; oxaloacetate from (S)-malate (quinone route): step 1/1. The protein is Probable malate:quinone oxidoreductase (mqo) of Klebsiella pneumoniae.